Reading from the N-terminus, the 181-residue chain is Translation initiation factor IF-3, chloroplastic (181 aa).

Belongs to the IF-3 family. As to quaternary structure, monomer.

Its subcellular location is the plastid. It localises to the chloroplast. Functionally, IF-3 binds to the 30S ribosomal subunit and shifts the equilibrium between 70S ribosomes and their 50S and 30S subunits in favor of the free subunits, thus enhancing the availability of 30S subunits on which protein synthesis initiation begins. This Gracilaria tenuistipitata var. liui (Red alga) protein is Translation initiation factor IF-3, chloroplastic.